The sequence spans 1615 residues: Ras-responsive element-binding protein 1 (1615 aa).

The tract at residues 1–44 (MMSAVMNVGKIAENGGTSQTVKSPSKSPAPNRIGRRNQETKEEK) is disordered. Residues 15–28 (GGTSQTVKSPSKSP) show a composition bias toward polar residues. 3 C2H2-type zinc fingers span residues 47-69 (YTCPLCEKICTTQHQLTMHIRQH), 78-100 (HSCSICGKSLSSASSLDRHMLVH), and 106-128 (YKCSVCGQSFTTNGNMHRHMKIH). Positions 127–169 (IHEKDPNSTASTTPPSPLKAKRLSSKRKFSQDAEMDREERTPA) are disordered. The span at 145-154 (KAKRLSSKRK) shows a compositional bias: basic residues. C2H2-type zinc fingers lie at residues 189 to 211 (YHCPVCFKDFFCKYALESHMETH), 216 to 239 (LRCDICCITFRTHRGLLRHNAVIH), and 297 to 319 (FICETCNKAFPMLLALKLHTETH). The disordered stretch occupies residues 511–556 (SAQQASPGCISPSLPPPPLRLIKNSVETSSNSHLSQPGAKSSPSSQ). Polar residues predominate over residues 535–549 (SVETSSNSHLSQPGA). 4 C2H2-type zinc fingers span residues 622–644 (YPCRFCDQVFAFSGVLRAHIRSH), 650–672 (YQCNICDYIAADKAALIRHLRTH), 732–754 (TVCKLCGEDLKHYRALRIHMRTH), and 763–788 (FECKECGTAFSAKRNCIHHILKQHLH). Disordered regions lie at residues 1025 to 1044 (AADASPKAASSSTGCDKSGN), 1058 to 1104 (DSNL…VDLE), and 1123 to 1162 (KFSPFLQSTDNFKEESGQNGTSEDEKETPEDKLLRGKRNT). A compositionally biased stretch (low complexity) spans 1026-1036 (ADASPKAASSS). Positions 1082–1095 (TKKRGRKKGTKNKP) are enriched in basic residues. Polar residues predominate over residues 1123 to 1132 (KFSPFLQSTD). A C2H2-type 11 zinc finger spans residues 1170–1192 (ITCPYCPRVFSWASSLQRHMLTH). Disordered regions lie at residues 1214 to 1269 (CEKE…KSLD) and 1313 to 1418 (LSRH…DKRK). The segment covering 1242–1262 (PAEEDAEEKADEYEEGPEEDS) has biased composition (acidic residues). A C2H2-type 12 zinc finger spans residues 1298-1320 (HACDVCGKTFKFAGALSRHKKAH). Composition is skewed to basic and acidic residues over residues 1321 to 1339 (IREDRKDERSSEDESKSIQ) and 1388 to 1414 (GTERKSTEKSSDDKIPKTDEAKSTAKA). 2 C2H2-type zinc fingers span residues 1419–1441 (KVCTVCNKRFWSLQDLTRHMRSH) and 1447–1469 (YKCQTCERTFTLKHSLVRHQRIH). Residues 1464 to 1477 (RHQRIHQKVKNTRN) are compositionally biased toward basic residues. Residues 1464–1585 (RHQRIHQKVK…SELERPSGFI (122 aa)) are disordered. Basic and acidic residues-rich tracts occupy residues 1478-1493 (HGKESDKEETQSRCGE) and 1566-1580 (PAKDQEPRGSSELER).

The protein belongs to the krueppel C2H2-type zinc-finger protein family. Broadly expressed, except in brain.

It is found in the nucleus. Transcription factor that binds specifically to the RAS-responsive elements (RRE) of gene promoters. The polypeptide is Ras-responsive element-binding protein 1 (RREB1) (Gallus gallus (Chicken)).